A 433-amino-acid polypeptide reads, in one-letter code: 23S rRNA (uracil(1939)-C(5))-methyltransferase RlmD (433 aa).

The TRAM domain occupies 10–68 (RTTTRQIITVSVNDLDSFGQGVARHNGKTLFIPGLLPQENAEVTVTEDKKQYARAKVVR). [4Fe-4S] cluster contacts are provided by Cys-81, Cys-87, Cys-90, and Cys-162. The S-adenosyl-L-methionine site is built by Gln-265, Phe-294, Asn-299, Glu-315, Asn-342, and Asp-363. The active-site Nucleophile is Cys-389.

It belongs to the class I-like SAM-binding methyltransferase superfamily. RNA M5U methyltransferase family. RlmD subfamily.

The enzyme catalyses uridine(1939) in 23S rRNA + S-adenosyl-L-methionine = 5-methyluridine(1939) in 23S rRNA + S-adenosyl-L-homocysteine + H(+). Functionally, catalyzes the formation of 5-methyl-uridine at position 1939 (m5U1939) in 23S rRNA. The polypeptide is 23S rRNA (uracil(1939)-C(5))-methyltransferase RlmD (Shigella boydii serotype 4 (strain Sb227)).